Consider the following 641-residue polypeptide: ATP-dependent zinc metalloprotease FtsH (641 aa).

The Cytoplasmic portion of the chain corresponds to 1 to 16; it reads MNKQQKPKRSPLRPDY. The helical transmembrane segment at 17–37 threads the bilayer; sequence LVIVIIILLAIGMYFFFTEMM. Topologically, residues 38-131 are extracellular; sequence APKVKQFDEF…VSFVPHVSVD (94 aa). Residues 132-152 traverse the membrane as a helical segment; it reads FWNIISTLLLIAAPIVLVVIM. The Cytoplasmic portion of the chain corresponds to 153-641; the sequence is FRSMSSQSNK…EVEEDSKKSE (489 aa). 222–229 serves as a coordination point for ATP; sequence GQPGTGKT. H444 contacts Zn(2+). The active site involves E445. Residues H448 and D520 each contribute to the Zn(2+) site.

In the central section; belongs to the AAA ATPase family. The protein in the C-terminal section; belongs to the peptidase M41 family. Homohexamer. Zn(2+) is required as a cofactor.

The protein resides in the cell membrane. Its function is as follows. Acts as a processive, ATP-dependent zinc metallopeptidase for both cytoplasmic and membrane proteins. Plays a role in the quality control of integral membrane proteins. In Acholeplasma laidlawii (strain PG-8A), this protein is ATP-dependent zinc metalloprotease FtsH.